The chain runs to 323 residues: SURF1-like protein (323 aa).

The span at 57–71 shows a compositional bias: basic and acidic residues; it reads DAPKSRENREKDGGK. A disordered region spans residues 57–76; it reads DAPKSRENREKDGGKSKKSK. Transmembrane regions (helical) follow at residues 81–101 and 299–319; these read WSTG…LGIW and HLNY…MWIH.

Belongs to the SURF1 family.

It localises to the mitochondrion inner membrane. Functionally, probably involved in the biogenesis of the COX complex. The sequence is that of SURF1-like protein (sft-1) from Caenorhabditis elegans.